Here is a 228-residue protein sequence, read N- to C-terminus: MERMNDNVLTLQMLCAEQGMEIDLPTLQQLARYGDCLERWNHKINLISRKEDAPVIIKHIFHSLLITLYHSFREGEDVLDLGTGGGLPGIPLSLLFPRTRFLLVDATGKKIAACQAMITELGINNAIALHTRVEELKGVVFDTVLSRQVAPLDKLCSYSAPLLKAGGTLICLKGGNLENEIAAAMKSNKGQEGFPSKVELHPIHGISPFFSEKQIVIVHGKNSSANND.

S-adenosyl-L-methionine contacts are provided by residues Gly-82, Leu-87, 105–107 (DAT), 133–134 (VE), and Arg-147.

Belongs to the methyltransferase superfamily. RNA methyltransferase RsmG family.

Its subcellular location is the cytoplasm. Functionally, specifically methylates the N7 position of a guanine in 16S rRNA. The sequence is that of Ribosomal RNA small subunit methyltransferase G from Pelodictyon phaeoclathratiforme (strain DSM 5477 / BU-1).